The chain runs to 210 residues: Urease accessory protein UreG (210 aa).

15–22 (GPVGSGKT) serves as a coordination point for GTP.

It belongs to the SIMIBI class G3E GTPase family. UreG subfamily. In terms of assembly, homodimer. UreD, UreF and UreG form a complex that acts as a GTP-hydrolysis-dependent molecular chaperone, activating the urease apoprotein by helping to assemble the nickel containing metallocenter of UreC. The UreE protein probably delivers the nickel.

The protein localises to the cytoplasm. Facilitates the functional incorporation of the urease nickel metallocenter. This process requires GTP hydrolysis, probably effectuated by UreG. The protein is Urease accessory protein UreG of Ralstonia nicotianae (strain ATCC BAA-1114 / GMI1000) (Ralstonia solanacearum).